A 147-amino-acid polypeptide reads, in one-letter code: MVHLTDAEKAAVNGLWGKVNPDDVGGEALGRLLVVYPWTQRYFDSFGDLSSASAIMGNPKVKAHGKKVINAFNDGLKHLDNLKGTFAHLSELHCDKLHVDPENFRLLGNMIVIVLGHHLGKEFTPCAQAAFQKVVAGVASALAHKYH.

At Val-2 the chain carries N-acetylvaline. One can recognise a Globin domain in the interval 3–147 (HLTDAEKAAV…VASALAHKYH (145 aa)). Position 18 is an N6-succinyllysine (Lys-18). A phosphoserine mark is found at Ser-45, Ser-51, and Ser-53. Lys-60 is modified (N6-succinyllysine). Heme b contacts are provided by His-64 and His-93. Position 105 is an asymmetric dimethylarginine (Arg-105). Residue Thr-124 is modified to Phosphothreonine.

The protein belongs to the globin family. As to quaternary structure, heterotetramer of two alpha chains and two beta chains. Red blood cells.

In terms of biological role, involved in oxygen transport from the lung to the various peripheral tissues. This chain is Hemoglobin subunit beta-1 (Hbb), found in Rattus norvegicus (Rat).